The primary structure comprises 280 residues: 23S rRNA (guanine(748)-N(1))-methyltransferase (280 aa).

Zn(2+) contacts are provided by cysteine 11, cysteine 14, cysteine 27, and histidine 31. S-adenosyl-L-methionine-binding positions include tyrosine 70, threonine 100–glycine 101, and histidine 188.

This sequence belongs to the methyltransferase superfamily. RlmA family.

It catalyses the reaction guanosine(748) in 23S rRNA + S-adenosyl-L-methionine = N(1)-methylguanosine(748) in 23S rRNA + S-adenosyl-L-homocysteine + H(+). In terms of biological role, specifically methylates the guanosine in position 748 of 23S rRNA. Confers resistance to the macrolide antibiotic tylosine. This chain is 23S rRNA (guanine(748)-N(1))-methyltransferase (rlmAII), found in Streptomyces fradiae (Streptomyces roseoflavus).